The primary structure comprises 68 residues: Neuronal regeneration-related protein (68 aa).

The disordered stretch occupies residues 42 to 68 (EETGAASLTPPGSREFTSPATSYLHPF).

In terms of assembly, interacts with FLNA. Interacts with the latency-associated peptides (LAP) of TGFB1 and TGFB2; the interaction results in a decrease in TGFB autoinduction. Phosphorylated on Ser-59. Phosphorylation decreases stability and activity. As to expression, expressed in brain and fetal lung.

The protein localises to the cytoplasm. Functionally, may have roles in cellular differentiation. Ectopic expression induces differentiation of fibroblast into myofibroblast and myofibroblast ameboid migration. Increases retinoic-acid regulation of lipid-droplet biogenesis. May also have neural functions. Promotes axonal regeneration and augments motility of gliomas. Down-regulates the expression of TGFB1 and TGFB2 but not of TGFB3. May play a role in the regulation of alveolar generation. The sequence is that of Neuronal regeneration-related protein (Nrep) from Mus musculus (Mouse).